The primary structure comprises 921 residues: Extended synaptotagmin-2 (921 aa).

Over 1-103 the chain is Cytoplasmic; sequence MTANRDAALS…RPGGPENPGG (103 aa). Residues 1–103 are disordered; that stretch reads MTANRDAALS…RPGGPENPGG (103 aa). Residues 58–75 show a composition bias toward basic residues; sequence GARRRAKTARGLRGHRQR. The helical transmembrane segment at 104 to 124 threads the bilayer; sequence VLSVELPGLLAQLARSFALLL. The Lumenal portion of the chain corresponds to 125 to 127; the sequence is PVY. A helical membrane pass occupies residues 128–148; that stretch reads ALGYLGLSFSWVLLALALLAW. The Cytoplasmic segment spans residues 149-921; sequence CRRSRGLKAL…EDGTRPQAMT (773 aa). An SMP-LTD domain is found at 191–370; the sequence is DTERAEWLNK…LPNRITVPLV (180 aa). 2 C2 domains span residues 369–489 and 514–639; these read LVSE…DEWF and NLDK…QLSN. 9 residues coordinate Ca(2+): Lys-400, Asp-401, Asp-413, Asp-460, Glu-461, Asp-462, Asp-464, Asp-466, and Asp-467. Residues 660-754 are disordered; it reads RERPPDHQHS…GHISVKEPTP (95 aa). 2 positions are modified to phosphoserine: Ser-691 and Ser-693. Thr-705 is subject to Phosphothreonine. Ser-736, Ser-738, Ser-739, Ser-743, Ser-748, Ser-755, Ser-758, and Ser-761 each carry phosphoserine. Residues 786–908 form the C2 3 domain; sequence PLGQIQLTIR…ELAKGWTQWY (123 aa). A required for phosphatidylinositol 4,5-bisphosphate-dependent location at the cell membrane region spans residues 833–840; it reads KRRSGRRK.

The protein belongs to the extended synaptotagmin family. Homodimer. Interacts with ESYT1 and ESYT3. Interacts with FGFR1 that has been activated by FGF1 binding. Interacts with the AP-2 complex; identified in a complex with the AP-2 complex and FGFR1. In terms of tissue distribution, widely expressed with high level in cerebellum.

The protein resides in the cell membrane. It localises to the endoplasmic reticulum membrane. Functionally, tethers the endoplasmic reticulum to the cell membrane and promotes the formation of appositions between the endoplasmic reticulum and the cell membrane. Binds glycerophospholipids in a barrel-like domain and may play a role in cellular lipid transport. Plays a role in FGF signaling via its role in the rapid internalization of FGFR1 that has been activated by FGF1 binding; this occurs most likely via the AP-2 complex. Promotes the localization of SACM1L at endoplasmic reticulum-plasma membrane contact sites (EPCS). The protein is Extended synaptotagmin-2 of Homo sapiens (Human).